A 3898-amino-acid polypeptide reads, in one-letter code: Genome polyprotein (3898 aa).

The Peptidase C53 domain occupies M1–C168. Active-site for N-terminal protease activity residues include E22, H49, and C69. The interval C112–C138 is zinc-binding TRASH domain. N-linked (GlcNAc...) asparagine; by host glycosylation is present at N157. The disordered stretch occupies residues K221–E242. Residues N269, N278, and N332 are each glycosylated (N-linked (GlcNAc...) asparagine; by host). Cystine bridges form between C305–C349 and C335–C336. 2 N-linked (GlcNAc...) asparagine; by host glycosylation sites follow: N362 and N367. 2 cysteine pairs are disulfide-bonded: C377/C422 and C381/C405. N-linked (GlcNAc...) asparagine; by host glycosylation is found at N410, N425, N500, and N594. A disulfide bridge connects residues C693 and C737. N-linked (GlcNAc...) asparagine; by host glycosylation is found at N805, N810, N874, N918, and N949. 9 consecutive transmembrane segments (helical) span residues F1031–T1051, V1070–L1090, I1104–L1124, Q1140–A1164, L1189–S1209, L1217–V1237, L1247–T1267, V1281–L1301, and T1360–I1380. The Peptidase C74 domain occupies K1441–R1589. Active-site for cysteine protease NS2 activity residues include H1447, E1461, and C1512. The helical transmembrane segment at M1568–L1588 threads the bilayer. The 174-residue stretch at G1590 to R1763 folds into the Peptidase S31 domain. Residues H1658 and D1695 each act as charge relay system; for serine protease NS3 activity in the active site. The N-linked (GlcNAc...) asparagine; by host glycan is linked to N1713. The active-site Charge relay system; for serine protease NS3 activity is the S1752. Residues I1802–A1960 form the Helicase ATP-binding domain. L1815–T1822 contributes to the ATP binding site. The short motif at D1910–H1913 is the DEAH box element. The Helicase C-terminal domain occupies G1978 to M2179. 7 N-linked (GlcNAc...) asparagine; by host glycosylation sites follow: N2134, N2217, N2419, N2494, N2787, N2815, and N2891. Residues P2968–T2980 are compositionally biased toward low complexity. The tract at residues P2968–K2987 is disordered. 3 N-linked (GlcNAc...) asparagine; by host glycosylation sites follow: N3103, N3211, and N3316. T3500 and L3502 together coordinate GTP. The 124-residue stretch at P3519–F3642 folds into the RdRp catalytic domain. N-linked (GlcNAc...) asparagine; by host glycosylation occurs at N3689. R3697 is a binding site for GTP. N3698 is a glycosylation site (N-linked (GlcNAc...) asparagine; by host). K3705 serves as a coordination point for GTP. N-linked (GlcNAc...) asparagine; by host glycosylation occurs at N3794.

The protein belongs to the pestivirus polyprotein family. In terms of assembly, interacts (via N-terminus) with host SP1; this interaction induces proteasomal degradation of SP1 with subsequent down-regulation of HDAC1 and ISG15 expression thereby counteracting the host innate immunity. Interacts (via C-terminus) with host IRF3. As to quaternary structure, interacts with host OS9. Homodimer; disulfide-linked. Interacts with host RPSA. In terms of assembly, homodimer; disulfide-linked. Heterodimer with E1; disulfide-linked. As to quaternary structure, homodimer; disulfide-linked. Heterodimer with E1; disulfide-linked. Interacts with host TRX2. Interacts with host receptor ADAM17 (via metalloproteinase domain); this interaction allows binding and probably entry of the virus into the host cell. Interacts with host ANXA2; this interaction allows binding and probably entry of the virus into the host cell. Interacts with host MERTK; this interaction allows binding and probably entry of the virus into the host cell. Interacts with host TRAF6; this interaction inhibits host NF-kappa-B pathway. Interacts with NS5B; this interaction enhances RNA-dependent RNA polymerase activity. Interacts with protein NS4A. In terms of assembly, interacts with host RAB5, this interaction facilitates the formation of NS4B-related complex. Interacts with host FTH1; this interaction plays a positive role in viral anti-apoptosis. As to quaternary structure, interacts with RNA-directed RNA polymerase. Interacts with host RSAD2; this interaction inhibits viral replication. Interacts with NS5A; this interaction promotes viral replication. Heavily glycosylated. In terms of processing, the viral RNA of pestiviruses is expressed as a single polyprotein which undergoes post-translational proteolytic processing resulting in the production of at least eleven individual proteins. The N-terminal protease cleaves itself from the nascent polyprotein autocatalytically and thereby generates the N-terminus of the adjacent viral capsid protein C. Post-translationally, cleavage between E2 and p7 is partial.

Its subcellular location is the virion. The protein localises to the host membrane. The protein resides in the virion membrane. It is found in the host cell surface. It localises to the host cytoplasm. The catalysed reaction is Leu is conserved at position P1 for all four cleavage sites. Alanine is found at position P1' of the NS4A-NS4B cleavage site, whereas serine is found at position P1' of the NS3-NS4A, NS4B-NS5A and NS5A-NS5B cleavage sites.. It catalyses the reaction RNA(n) + a ribonucleoside 5'-triphosphate = RNA(n+1) + diphosphate. It carries out the reaction a ribonucleoside 5'-triphosphate + H2O = a ribonucleoside 5'-diphosphate + phosphate + H(+). The enzyme catalyses ATP + H2O = ADP + phosphate + H(+). Leader cysteine autoprotease that cleaves itself from the nascent polyprotein during translation of the viral mRNA. Once released, plays a role in the inhibition of host innate immune response by interacting with host IRF3 and inducing its proteasomal degradation. Functionally, packages viral RNA to form a viral nucleocapsid and thereby protects viral RNA. Also plays a role in transcription regulation. Protects the incoming virus against IFN-induced effectors. Its function is as follows. Plays a role in viral entry. Interacts with host RPSA that acts as a cellular attachment receptor for the virus. Also possesses intrinsic ribonuclease (RNase) activity that can inhibit the production of type I interferon and assist in the development of persistent infections. Cleaves preferentially NpU bonds. Binds to heparan sulfate on the host cells for entry. In terms of biological role, plays a role in cell attachment and subsequent fusion of viral and cellular membranes. Therefore, mediates together with envelope glycoprotein E2 the viral entry. Plays a role in cell attachment and subsequent fusion of viral and cellular membranes. Therefore, mediates together with envelope glycoprotein E1 the viral entry. Binds to host ADAM17 receptor for entry. Binds to host ANXA2 for entry. Binds to host MERTK for entry. Functionally, plays an essential role in the virus replication cycle by acting as a viroporin. Forms ion conductive pores, which alters the cell permeability allowing the transport of ions and other small molecules. Its function is as follows. Autoprotease that associates with the host chaperone JIV and cleaves the NS2-3 protein between NS2 and NS3. Also plays a role in the formation of infectious particles. In terms of biological role, plays a role in the regulation of viral RNA replication. Multifunctional protein that contains an N-terminal protease and a C-terminal helicase, playing essential roles in viral polyprotein processing and viral genome replication. The chymotrypsin-like serine protease activity utilizes NS4A as an essential cofactor and catalyzes the cleavage of the polyprotein leading to the release of NS4A, NS4B, NS5A, and NS5B. Plays a role in the inhibition of host NF-kappa-B activation by interacting with and inhibiting host TRAF6. Interacts with NS5B to enhance RNA-dependent RNA polymerase activity. Functionally, acts as a cofactor for the NS3 protease activity. Its function is as follows. Induces a specific membrane alteration that serves as a scaffold for the virus replication complex. Antagonizes host cell apoptosis by interacting with host ferritin heavy chain. The ORF4 protein physically binds host FTH1/FHC, resulting in the reduction of FTH1 protein levels in host cells. Reduction of FTH1 concentration further inhibits the accumulation of reactive oxygen in host cells, leading to reduced apoptosis. In terms of biological role, regulates viral RNA replication by interacting with the 3'-untranslated region of viral RNA in a dose-dependent manner. At small concentrations promotes viral synthesis by interacting with the polymerase NS5B while at large concentrations, inhibits replication. Replicates the viral (+) and (-) genome. The polypeptide is Genome polyprotein (Sus scrofa (Pig)).